Here is a 376-residue protein sequence, read N- to C-terminus: O-demethylpuromycin-O-methyltransferase (376 aa).

Residues 1-28 (MAPTEATRGGPADPAPAPEAHRGGHTEH) form a disordered region. Positions 19-28 (EAHRGGHTEH) are enriched in basic and acidic residues. Residues D235 and 261–263 (GDF) each bind S-adenosyl-L-methionine. The active-site Proton acceptor is H281.

The protein belongs to the class I-like SAM-binding methyltransferase superfamily. Cation-independent O-methyltransferase family.

It carries out the reaction O-demethylpuromycin + S-adenosyl-L-methionine = puromycin + S-adenosyl-L-homocysteine + H(+). In Streptomyces alboniger, this protein is O-demethylpuromycin-O-methyltransferase (dmpM).